The chain runs to 662 residues: Probable dolichyl-phosphate-mannose--protein mannosyltransferase 7 (662 aa).

Topologically, residues 1–26 are lumenal; the sequence is MKDLRLQGPYRKYIPYNIFQQCGIGH. The chain crosses the membrane as a helical span at residues 27–47; it reads LKTLDYIFAFLIVITNFTLIW. Residues 48–159 are Cytoplasmic-facing; that stretch reads KSHSSSFWNR…GTIISFDSLE (112 aa). A helical transmembrane segment spans residues 160–180; the sequence is WCLFSVVIYSFISISIAKLGT. At 181–195 the chain is on the lumenal side; that stretch reads TNWFANVITLSISLG. The chain crosses the membrane as a helical span at residues 196–216; the sequence is LAISSKFIGIVTWAFVILSFV. At 217–235 the chain is on the cytoplasmic side; sequence RQFDRLISDVKVTTIQIIK. Residues 236–256 form a helical membrane-spanning segment; it reads FVILCLLFVLIIPGSIFIISY. Residues 257–482 lie on the Lumenal side of the membrane; sequence SNLLSNFKTD…MEYPVIPRTT (226 aa). The 56-residue stretch at 289–344 folds into the MIR 1 domain; that stretch reads PSRLYYGSTITLRHLDSMVGYLASHDISYPSDVDEQLVALSFEEFAADNEWLIEHP. A glycan (N-linked (GlcNAc...) asparagine) is linked at Asn347. MIR domains follow at residues 359-418 and 432-488; these read LIPV…VLLI and DKYI…IDSV. The chain crosses the membrane as a helical span at residues 483-503; that stretch reads FLIDSVQLPVDFQVPMIEYYI. Residues 504–565 lie on the Cytoplasmic side of the membrane; that stretch reads GKISSSAEFN…KWPITLDTDS (62 aa). The helical transmembrane segment at 566-586 threads the bilayer; it reads PVWFNFAWYGSLLSMIIFMCV. The Lumenal portion of the chain corresponds to 587 to 617; that stretch reads QCKRMISWNPWTTAEPSFSIKWEVYNEFGWE. A helical transmembrane segment spans residues 618–638; that stretch reads CIVGWFLHFYIFTMSPHFNLG. Over 639–662 the chain is Cytoplasmic; it reads KKLYFQSFFFSVLCLLESLDCLAK.

It belongs to the glycosyltransferase 39 family.

The protein localises to the endoplasmic reticulum membrane. It catalyses the reaction a di-trans,poly-cis-dolichyl beta-D-mannosyl phosphate + L-seryl-[protein] = 3-O-(alpha-D-mannosyl)-L-seryl-[protein] + a di-trans,poly-cis-dolichyl phosphate + H(+). It carries out the reaction a di-trans,poly-cis-dolichyl beta-D-mannosyl phosphate + L-threonyl-[protein] = 3-O-(alpha-D-mannosyl)-L-threonyl-[protein] + a di-trans,poly-cis-dolichyl phosphate + H(+). It participates in protein modification; protein glycosylation. Its function is as follows. Probable protein O-mannosyltransferase involved in O-glycosylation which is essential for cell wall rigidity. Transfers mannose from Dol-P-mannose to Ser or Thr residues on proteins. In Saccharomyces cerevisiae (strain ATCC 204508 / S288c) (Baker's yeast), this protein is Probable dolichyl-phosphate-mannose--protein mannosyltransferase 7.